The chain runs to 270 residues: 3-phenylpropionate-dihydrodiol/cinnamic acid-dihydrodiol dehydrogenase (270 aa).

An NAD(+)-binding site is contributed by 10–34; that stretch reads FITGGGSGLGLALVERFIEEGAQVA. Ser143 contributes to the substrate binding site. The active-site Proton acceptor is Tyr156.

Belongs to the short-chain dehydrogenases/reductases (SDR) family.

The catalysed reaction is 3-(cis-5,6-dihydroxycyclohexa-1,3-dien-1-yl)propanoate + NAD(+) = 3-(2,3-dihydroxyphenyl)propanoate + NADH + H(+). It carries out the reaction (2E)-3-(cis-5,6-dihydroxycyclohexa-1,3-dien-1-yl)prop-2-enoate + NAD(+) = (2E)-3-(2,3-dihydroxyphenyl)prop-2-enoate + NADH + H(+). The protein operates within aromatic compound metabolism; 3-phenylpropanoate degradation. Converts 3-phenylpropionate-dihydrodiol (PP-dihydrodiol) and cinnamic acid-dihydrodiol (CI-dihydrodiol) into 3-(2,3-dihydroxylphenyl)propanoic acid (DHPP) and 2,3-dihydroxicinnamic acid (DHCI), respectively. The chain is 3-phenylpropionate-dihydrodiol/cinnamic acid-dihydrodiol dehydrogenase from Escherichia coli (strain SMS-3-5 / SECEC).